The primary structure comprises 125 residues: Small ribosomal subunit protein uS13 (125 aa).

Residues 93 to 125 (RKGLPVRGQRTKTNARTRKGPKRTVAGKKKAGR) form a disordered region.

Belongs to the universal ribosomal protein uS13 family. In terms of assembly, part of the 30S ribosomal subunit. Forms a loose heterodimer with protein S19. Forms two bridges to the 50S subunit in the 70S ribosome.

Located at the top of the head of the 30S subunit, it contacts several helices of the 16S rRNA. In the 70S ribosome it contacts the 23S rRNA (bridge B1a) and protein L5 of the 50S subunit (bridge B1b), connecting the 2 subunits; these bridges are implicated in subunit movement. Contacts the tRNAs in the A and P-sites. This chain is Small ribosomal subunit protein uS13, found in Arthrobacter sp. (strain FB24).